The primary structure comprises 346 residues: HLA class I histocompatibility antigen, alpha chain F (346 aa).

Positions 1–21 (MAPRSLLLLLSGALALTDTWA) are cleaved as a signal peptide. Residues 22 to 111 (GSHSLRYFST…LLRRYNQSEA (90 aa)) are alpha-1. Topologically, residues 22 to 305 (GSHSLRYFST…EQSPQPTIPI (284 aa)) are extracellular. Positions 91 and 105 each coordinate a peptide antigen. Residue asparagine 107 is glycosylated (N-linked (GlcNAc...) asparagine). Residues 112–203 (GSHTLQGMNG…ENGKETLQRA (92 aa)) form an alpha-2 region. 2 disulfides stabilise this stretch: cysteine 122/cysteine 185 and cysteine 224/cysteine 280. Threonine 164, tyrosine 168, and glutamate 176 together coordinate a peptide antigen. The segment at 204 to 295 (DPPKAHVAHH…GLPQPLILRW (92 aa)) is alpha-3. An Ig-like C1-type domain is found at 206-296 (PKAHVAHHPI…LPQPLILRWE (91 aa)). The connecting peptide stretch occupies residues 296-305 (EQSPQPTIPI). A helical membrane pass occupies residues 306-329 (VGIVAGLVVLGAVVTGAVVAAVMW). Over 330–346 (RKKSSDRNRGSYSQAAV) the chain is Cytoplasmic. The short motif at 336–338 (RNR) is the Sorting signal sequence; Golgi-retention signal; ER-retention signal element.

It belongs to the MHC class I family. In terms of assembly, forms a heterotrimer with B2M and a self-peptide. Binds a diverse number of peptides ranging from 7 to more than 30 amino acids. Peptide-bound HLA-F-B2M interacts with LILRB1 and LILRB2 but not with KIR3DS1 or KIR3DL2; this interaction is direct. The OC form interacts with KIR3DS1, KIR2DS4 and KIR3DL2; this interaction is direct. Interacts with TAP1-TAP2 complex and CALR; this interaction is required for appropriate folding and peptide loading. Interacts with the coat protein complex II and 14-3-3 proteins; these interactions likely control the anterograde ER-to-Golgi transport of HLA-F. HLA-F-B2M complex interacts with the heavy chain of other MHC class I molecules including HLA-A and HLA-E; this interaction may regulate the intracellular trafficking and the stability of peptide-free MHC class I OCs. N-glycosylated. Expressed in resting B cells (at protein level). Expressed in secondary lymphoid organs rich in B and T cells such as the tonsils, spleen, and thymus (at protein level). Expressed in the endothelial cells of the tonsils. Expressed on activated lymphoid cells including B cells, NK cells, CD4+ T cells and memory T cells (at protein level). Expressed in motor neurons of spinal cord.

The protein localises to the cell membrane. It is found in the early endosome membrane. It localises to the lysosome membrane. Its function is as follows. Non-classical major histocompatibility class Ib molecule postulated to play a role in immune surveillance, immune tolerance and inflammation. Functions in two forms, as a heterotrimeric complex with B2M/beta-2 microglobulin and a peptide (peptide-bound HLA-F-B2M) and as an open conformer (OC) devoid of peptide and B2M (peptide-free OC). In complex with B2M, presents non-canonical self-peptides carrying post-translational modifications, particularly phosphorylated self-peptides. Peptide-bound HLA-F-B2M acts as a ligand for LILRB1 inhibitory receptor, a major player in maternal-fetal tolerance. Peptide-free OC acts as a ligand for KIR3DS1 and KIR3DL2 receptors. Upon interaction with activating KIR3DS1 receptor on NK cells, triggers NK cell degranulation and anti-viral cytokine production. Through interaction with KIR3DL2 receptor, inhibits NK and T cell effector functions. May interact with other MHC class I OCs to cross-present exogenous viral, tumor or minor histompatibility antigens to cytotoxic CD8+ T cells, triggering effector and memory responses. May play a role in inflammatory responses in the peripheral nervous system. Through interaction with KIR3DL2, may protect motor neurons from astrocyte-induced toxicity. The chain is HLA class I histocompatibility antigen, alpha chain F from Homo sapiens (Human).